The primary structure comprises 719 residues: Forkhead box protein K1 (719 aa).

Ala2 bears the N-acetylalanine mark. The interval Ala2 to Pro40 is interaction with SIN3A and SIN3B. Residues Pro35–Ala67 form a disordered region. Pro residues predominate over residues Thr38–Val62. Residues Ala81 to Ser406 are required for interaction with FOXO4 and MEF2C. Phosphoserine is present on Ser87. The 53-residue stretch at Val109–Gln161 folds into the FHA domain. An omega-N-methylarginine mark is found at Arg147 and Arg177. Phosphoserine occurs at positions 199, 209, 225, and 229. 2 positions are modified to phosphothreonine: Thr231 and Thr233. A phosphoserine mark is found at Ser239, Ser243, Ser281, and Ser285. Positions Lys291–Arg386 form a DNA-binding region, fork-head. The disordered stretch occupies residues Ser399 to Leu443. Phosphoserine occurs at positions 402 and 406. At Thr408 the chain carries Phosphothreonine. Ser414 is modified (phosphoserine). A Phosphothreonine modification is found at Thr422. A phosphoserine mark is found at Ser427, Ser431, and Ser445. The segment covering Ala665–Glu685 has biased composition (low complexity). Residues Ala665–Glu719 are disordered. The segment covering Pro686–Glu695 has biased composition (basic and acidic residues). Positions Pro696–Pro712 are enriched in low complexity.

In terms of assembly, interacts with SIN3A and SIN3B (via PAH2) to form a complex which represses transcription. Component of SIN3A-, but not SIN3B-, containing multiprotein complexes. Interacts with FOXO4 and MEF2C; both interactions inhibit FOXO4 and MEF2C transactivation activity. Interacts (when phosphorylated) with YWHAE/14-3-3-epsilon; promotes sequestration in the cytoplasm and leads to impaired ability to bind DNA. Interacts with FHL2. Interacts with SRF. Interacts with DVL2 and DVL3; the interaction induces DVL2 nuclear translocation. Interacts with BAP1 (when phosphorylated). Accessory component of the polycomb repressive deubiquitinase (PR-DUB) complex, at least composed of BAP1, one of ASXL1, ASXL2 or (probably) ASXL3 and one of MBD5 or MBD6. The PR-DUB core associates with a number of accessory proteins, including FOXK1, FOXK2, KDM1B, HCFC1 and OGT. In terms of processing, phosphorylation by GSK3 (GSK3A or GSK3B) promotes interaction with YWHAE/14-3-3-epsilon and retention in the cytoplasm. In response to mTORC1 signaling, phosphorylation by GSK3 is prevented, leading to translocation to the nucleus. In terms of tissue distribution, expressed in tissues and cells in which the myoglobin gene is transcriptionally active including cardiac and skeletal myocytes, brain and kidney. In the adult brain, expressed in the piriform cortex and the indusium griseum. In the hippocampus, expression is localized to the dentate gyrus and CA3 area. In the cerebellum, expression is confined to the Purkinje cell layer. Present in neuroretinal cells: expressed in rod bipolar cells, amacrine cells and ganglion cells (at protein level).

It is found in the nucleus. It localises to the cytoplasm. Its function is as follows. Transcriptional regulator involved in different processes such as glucose metabolism, aerobic glycolysis, muscle cell differentiation and autophagy. Recognizes and binds the forkhead DNA sequence motif (5'-GTAAACA-3') and can both act as a transcription activator or repressor, depending on the context. Together with FOXK2, acts as a key regulator of metabolic reprogramming towards aerobic glycolysis, a process in which glucose is converted to lactate in the presence of oxygen. Acts by promoting expression of enzymes for glycolysis (such as hexokinase-2 (HK2), phosphofructokinase, pyruvate kinase (PKLR) and lactate dehydrogenase), while suppressing further oxidation of pyruvate in the mitochondria by up-regulating pyruvate dehydrogenase kinases PDK1 and PDK4. Probably plays a role in gluconeogenesis during overnight fasting, when lactate from white adipose tissue and muscle is the main substrate. Involved in mTORC1-mediated metabolic reprogramming: in response to mTORC1 signaling, translocates into the nucleus and regulates the expression of genes associated with glycolysis and downstream anabolic pathways, such as HIF1A, thereby regulating glucose metabolism. Together with FOXK2, acts as a negative regulator of autophagy in skeletal muscle: in response to starvation, enters the nucleus, binds the promoters of autophagy genes and represses their expression, preventing proteolysis of skeletal muscle proteins. Acts as a transcriptional regulator of the myogenic progenitor cell population in skeletal muscle. Binds to the upstream enhancer region (CCAC box) of myoglobin (MB) gene, regulating the myogenic progenitor cell population. Promotes muscle progenitor cell proliferation by repressing the transcriptional activity of FOXO4, thereby inhibiting myogenic differentiation. Involved in remodeling processes of adult muscles that occur in response to physiological stimuli. Required to correct temporal orchestration of molecular and cellular events necessary for muscle repair. Represses myogenic differentiation by inhibiting MEFC activity. Positively regulates Wnt/beta-catenin signaling by translocating DVL into the nucleus. Reduces virus replication, probably by binding the interferon stimulated response element (ISRE) to promote antiviral gene expression. Accessory component of the polycomb repressive deubiquitinase (PR-DUB) complex; recruits the PR-DUB complex to specific FOXK1-bound genes. In Mus musculus (Mouse), this protein is Forkhead box protein K1.